Consider the following 218-residue polypeptide: MSNVNKVYDWFEERLEIQAIADDITSKYVPPHVNIFYCLGGITLTCFLVQVATGFAMTFYYRPIVNEAFASVQYIMIEANFGWLIRSVHRWSASMMVLMMILHVFRVYLTGGFKKPRELTWVTGVLLGVLTASFGVTGYSLPWDQTGYWAIKIVTGVPEAIPLIGAPMVELLRGSASVGQFTLTRFYSLHTFVLPLITIVFMLMHFLMIRKQGISGPL.

A helical transmembrane segment spans residues 35 to 55 (IFYCLGGITLTCFLVQVATGF). Residue Cys38 participates in heme c binding. Positions 89 and 103 each coordinate heme b. 3 helical membrane passes run 93 to 113 (ASMMVLMMILHVFRVYLTGGF), 119 to 139 (LTWVTGVLLGVLTASFGVTGY), and 189 to 209 (LHTFVLPLITIVFMLMHFLMI). Heme b is bound by residues His190 and His205.

The protein belongs to the cytochrome b family. PetB subfamily. As to quaternary structure, the 4 large subunits of the cytochrome b6-f complex are cytochrome b6, subunit IV (17 kDa polypeptide, PetD), cytochrome f and the Rieske protein, while the 4 small subunits are PetG, PetL, PetM and PetN. The complex functions as a dimer. Heme b serves as cofactor. Heme c is required as a cofactor.

It localises to the plastid thylakoid membrane. In terms of biological role, component of the cytochrome b6-f complex, which mediates electron transfer between photosystem II (PSII) and photosystem I (PSI), cyclic electron flow around PSI, and state transitions. The polypeptide is Cytochrome b6 (petB) (Cuscuta gronovii (Common dodder)).